The chain runs to 199 residues: Probable molybdenum cofactor guanylyltransferase (199 aa).

GTP contacts are provided by residues 6-8 (LAG), lysine 18, aspartate 65, and aspartate 97. Residue aspartate 97 participates in Mg(2+) binding.

Belongs to the MobA family. Mg(2+) serves as cofactor.

The protein resides in the cytoplasm. The catalysed reaction is Mo-molybdopterin + GTP + H(+) = Mo-molybdopterin guanine dinucleotide + diphosphate. Its function is as follows. Transfers a GMP moiety from GTP to Mo-molybdopterin (Mo-MPT) cofactor (Moco or molybdenum cofactor) to form Mo-molybdopterin guanine dinucleotide (Mo-MGD) cofactor. This chain is Probable molybdenum cofactor guanylyltransferase, found in Staphylococcus aureus (strain Mu50 / ATCC 700699).